Here is a 503-residue protein sequence, read N- to C-terminus: Medium/long-chain-fatty-acid--CoA ligase FadD17 (503 aa).

It belongs to the ATP-dependent AMP-binding enzyme family.

It carries out the reaction a medium-chain fatty acid + ATP + CoA = a medium-chain fatty acyl-CoA + AMP + diphosphate. The catalysed reaction is a long-chain fatty acid + ATP + CoA = a long-chain fatty acyl-CoA + AMP + diphosphate. Its pathway is lipid metabolism; fatty acid biosynthesis. Functionally, catalyzes the activation of medium/long-chain fatty acids as acyl-coenzyme A (acyl-CoA), which are then transferred to the multifunctional polyketide synthase (PKS) type III for further chain extension. The protein is Medium/long-chain-fatty-acid--CoA ligase FadD17 (fadD17) of Mycobacterium marinum (strain ATCC BAA-535 / M).